Consider the following 955-residue polypeptide: Kinesin-like protein K39 (955 aa).

Residues 12–392 (RVKVSVRVRP…LRYASRARDI (381 aa)) form the Kinesin motor domain. 122-129 (GQTGSGKT) is a binding site for ATP. The stretch at 426-955 (PAYVSELKKK…EERAAELASQ (530 aa)) forms a coiled coil. 2 disordered regions span residues 682 to 712 (ELDAAASTSQNARESACERLTSLEQQLRESE) and 725 to 955 (TAAA…LASQ). A run of 7 repeats spans residues 704 to 742 (LEQQLRESEERAAELASQLEATAAAKSSAEQDRENTRAT), 743 to 781 (LEQQLRESEARAAELASQLEATAAAKMSAEQDRENTRAT), 782 to 820 (LEQQLRDSEERAAELASQLESTTAAKMSAEQDRESTRAT), 821 to 859 (LEQQLRDSEERAAELASQLESTTAAKMSAEQDRESTRAT), 860 to 898 (LEQQLRESEERAAELASQLESTTAAKMSAEQDRESTRAT), 899 to 937 (LEQQLRDSEERAAELASQLEATAAAKSSAEQDRENTRAA), and 938 to 955 (LEQQLRDSEERAAELASQ). The tract at residues 704 to 955 (LEQQLRESEE…EERAAELASQ (252 aa)) is 7 X 39 AA approximate tandem repeats. Basic and acidic residues-rich tracts occupy residues 785 to 794 (QLRDSEERAA), 824 to 833 (QLRDSEERAA), 863 to 872 (QLRESEERAA), 902 to 911 (QLRDSEERAA), and 941 to 955 (QLRDSEERAAELASQ).

This sequence belongs to the TRAFAC class myosin-kinesin ATPase superfamily. Kinesin family.

It is found in the cytoplasm. Its subcellular location is the cytoskeleton. The chain is Kinesin-like protein K39 (KIN) from Leishmania chagasi.